The sequence spans 314 residues: MSRPRRRGRDIHGVLLLDKPQGMSSNDVLQKVKRIYNANRAGHTGALDPLATGMLPICLGEATKFSQYLLDSDKRYRVIARLGQRTDTSDADGQIVQERPVTFSAEQLASALETFRGDIEQIPSMYSALKYQGKKLYEYARQGIEVPREARPITVYELLFIRHEGNELELEVHCSKGTYIRTIIDDLGEKLGCGAHVTYLRRLTVSKYPVDRMVTLEHLQTLVAQAEQQGVPAAQLLDPLLMPMDSPASDYPVVNLPLTSSVYFKNGNPVRTTGAPLKGLVRVTEGEDDKFIGMGEIDDEGRVAPRRLVVEYPA.

Histidine 43 provides a ligand contact to substrate. The active-site Nucleophile is the aspartate 48. Positions 76, 179, and 200 each coordinate substrate.

Belongs to the pseudouridine synthase TruB family. Type 1 subfamily.

It carries out the reaction uridine(55) in tRNA = pseudouridine(55) in tRNA. Responsible for synthesis of pseudouridine from uracil-55 in the psi GC loop of transfer RNAs. The protein is tRNA pseudouridine synthase B of Salmonella choleraesuis (strain SC-B67).